The sequence spans 249 residues: Ubiquinone biosynthesis protein COQ4 homolog, mitochondrial (249 aa).

Zn(2+) contacts are provided by His-134, Asp-135, His-138, and Glu-150.

This sequence belongs to the COQ4 family. In terms of assembly, component of a multi-subunit COQ enzyme complex. Zn(2+) is required as a cofactor.

The protein localises to the mitochondrion inner membrane. It carries out the reaction a 4-hydroxy-3-methoxy-5-(all-trans-polyprenyl)benzoate + H(+) = a 2-methoxy-6-(all-trans-polyprenyl)phenol + CO2. The protein operates within cofactor biosynthesis; ubiquinone biosynthesis. Lyase that catalyzes the C1-decarboxylation of 4-hydroxy-3-methoxy-5-(all-trans-polyprenyl)benzoic acid into 2-methoxy-6-(all-trans-polyprenyl)phenol during ubiquinone biosynthesis. This Trypanosoma brucei brucei (strain 927/4 GUTat10.1) protein is Ubiquinone biosynthesis protein COQ4 homolog, mitochondrial.